The primary structure comprises 3425 residues: Genome polyprotein (3425 aa).

Residues 3-16 (NKKPGRPGSGRVVN) form an interaction with host EXOC1 region. The hydrophobic; homodimerization of capsid protein C stretch occupies residues 38-73 (VLRGAGPIRFVLALLTFFKFTALRPTIGMLKRWKLV). Positions 105 to 120 (GGSCSWIIMLLPIVAG) are cleaved as a propeptide — ER anchor for the capsid protein C, removed in mature form by serine protease NS3. Residues 105 to 125 (GGSCSWIIMLLPIVAGLKLGN) traverse the membrane as a helical segment. N-linked (GlcNAc...) asparagine; by host glycosylation is present at N135. A run of 2 helical transmembrane segments spans residues 247 to 267 (WALR…NLGT) and 273 to 293 (IIFT…CLGM). Cystine bridges form between C290/C317, C347/C403, C361/C392, C379/C408, C477/C575, and C592/C623. Residues 385-398 (DRGWGNGCGLFGKG) are fusion peptide. Helical transmembrane passes span 740 to 760 (LFGG…LWMG) and 768 to 788 (ISMT…NVNA). C792 and C803 are oxidised to a cystine. N-linked (GlcNAc...) asparagine; by host glycans are attached at residues N918, N963, and N995. 4 disulfides stabilise this stretch: C967–C1011, C1068–C1117, C1079–C1100, and C1101–C1104. 7 consecutive transmembrane segments (helical) span residues 1138–1158 (VMAF…VMIV), 1169–1189 (TAPI…FGGI), 1214–1234 (IVHL…IGFL), 1290–1310 (FALP…IDVV), 1337–1357 (MLLG…FAGL), 1369–1389 (WPVS…GGIA), and 1395–1415 (SMAI…VTGF). Residues 1421 to 1460 (LEKASDISWSEEARVTGASQRFDVEIDQDGNMRLLNDPGV) are interacts with and activates NS3 protease. Residues 1499-1676 (GGVIWDVPAP…EKKEEEVPQV (178 aa)) form the Peptidase S7 domain. Catalysis depends on charge relay system; for serine protease NS3 activity residues H1549, D1573, and S1633. The Helicase ATP-binding domain maps to 1679–1835 (ENMLRKRQLT…DSNSPITDIE (157 aa)). The segment at 1683–1686 (RKRQ) is important for RNA-binding. 1692–1699 (LHPGSGKT) contacts ATP. Residues 1783–1786 (DEAH) carry the DEAH box motif. Positions 1845–2011 (SGYEWITDFQ…GLVAQLYGPE (167 aa)) constitute a Helicase C-terminal domain. Positions 2162-2166 (EELPE) are regulates the ATPase activity of NS3 helicase. Transmembrane regions (helical) follow at residues 2169–2189 (ETFL…LFFV), 2194–2214 (LGKT…LWIA), 2216–2236 (VPAQ…IVLI), 2252–2272 (VFMI…MGWL), 2306–2326 (AWAA…HLII), 2334–2354 (LMAM…MPFV), 2371–2391 (FTMT…AFLV), and 2441–2461 (CVLV…LTLT). The mRNA cap 0-1 NS5-type MT domain occupies 2521–2786 (GGGTGRTLGE…DVDLGSGTRA (266 aa)). An S-adenosyl-L-methionine-binding site is contributed by S2576. S2576 bears the Phosphoserine mark. K2581 serves as the catalytic For 2'-O-MTase activity. S-adenosyl-L-methionine is bound by residues G2606, W2607, T2624, K2625, and V2652. D2666 functions as the For 2'-O-MTase activity in the catalytic mechanism. I2667 contributes to the S-adenosyl-L-methionine binding site. Active-site for 2'-O-MTase activity residues include K2702 and E2738. Residue Y2740 participates in S-adenosyl-L-methionine binding. Residues E2960, H2964, C2969, and C2972 each contribute to the Zn(2+) site. One can recognise a RdRp catalytic domain in the interval 3050–3202 (GLMYADDTAG…KPADDRFATA (153 aa)). Residues H3237, C3253, and C3372 each contribute to the Zn(2+) site. The PDZ-binding motif lies at 3423 to 3425 (GVL).

In the N-terminal section; belongs to the class I-like SAM-binding methyltransferase superfamily. mRNA cap 0-1 NS5-type methyltransferase family. Homodimer. In terms of assembly, forms heterodimers with envelope protein E in the endoplasmic reticulum and Golgi. As to quaternary structure, homodimer; in the endoplasmic reticulum and Golgi. Interacts with protein prM. Interacts with non-structural protein 1. Homodimer; Homohexamer when secreted. Interacts with envelope protein E. NS1 interacts with NS4B. Interacts with host MAVS (via C-terminus); this interaction blocks the interaction of MAVS with RIGI or IFIH1/MDA5. In terms of assembly, interacts (via N-terminus) with serine protease NS3. As to quaternary structure, forms a heterodimer with serine protease NS3. May form homooligomers. Forms a heterodimer with NS2B. Interacts with non-structural protein 2A (via N-terminus). Interacts with NS4B. Interacts with unphosphorylated RNA-directed RNA polymerase NS5; this interaction stimulates RNA-directed RNA polymerase NS5 guanylyltransferase activity. In terms of assembly, interacts with serine protease NS3. As to quaternary structure, homodimer. Specific enzymatic cleavages in vivo yield mature proteins. Cleavages in the lumen of endoplasmic reticulum are performed by host signal peptidase, whereas cleavages in the cytoplasmic side are performed by serine protease NS3. Signal cleavage at the 2K-4B site requires a prior NS3 protease-mediated cleavage at the 4A-2K site. Both NS2A and NS2B proteins are required in cis for NS2A/2B proteolytic processing. In terms of processing, cleaved in post-Golgi vesicles by a host furin, releasing the mature small envelope protein M, and peptide pr. This cleavage is incomplete as up to 30% of viral particles still carry uncleaved prM. Post-translationally, N-glycosylated. N-glycosylated. The excreted form is glycosylated and this is required for efficient secretion of the protein from infected cells. In terms of processing, phosphorylated on serines residues. This phosphorylation may trigger NS5 nuclear localization.

Its subcellular location is the virion. The protein localises to the host nucleus. It is found in the host cytoplasm. It localises to the host perinuclear region. The protein resides in the secreted. Its subcellular location is the virion membrane. The protein localises to the host endoplasmic reticulum membrane. It catalyses the reaction Selective hydrolysis of -Xaa-Xaa-|-Yaa- bonds in which each of the Xaa can be either Arg or Lys and Yaa can be either Ser or Ala.. It carries out the reaction RNA(n) + a ribonucleoside 5'-triphosphate = RNA(n+1) + diphosphate. The enzyme catalyses a ribonucleoside 5'-triphosphate + H2O = a ribonucleoside 5'-diphosphate + phosphate + H(+). The catalysed reaction is ATP + H2O = ADP + phosphate + H(+). It catalyses the reaction a 5'-end (5'-triphosphoguanosine)-ribonucleoside in mRNA + S-adenosyl-L-methionine = a 5'-end (N(7)-methyl 5'-triphosphoguanosine)-ribonucleoside in mRNA + S-adenosyl-L-homocysteine. It carries out the reaction a 5'-end (N(7)-methyl 5'-triphosphoguanosine)-ribonucleoside in mRNA + S-adenosyl-L-methionine = a 5'-end (N(7)-methyl 5'-triphosphoguanosine)-(2'-O-methyl-ribonucleoside) in mRNA + S-adenosyl-L-homocysteine + H(+). Functionally, capsid protein self-assembles to form an icosahedral capsid about 40 nm in diameter. Plays a role in virus budding by binding to the cell membrane and gathering the viral RNA into a nucleocapsid that forms the core of a mature virus particle. In terms of biological role, prevents premature fusion activity of envelope proteins in trans-Golgi by binding to envelope protein E at pH6.0. After virion release in extracellular space, gets dissociated from E dimers. Its function is as follows. Acts as a chaperone for envelope protein E during intracellular virion assembly by masking and inactivating envelope protein E fusion peptide. prM is the only viral peptide matured by host furin in the trans-Golgi network probably to avoid catastrophic activation of the viral fusion activity in acidic Golgi compartment prior to virion release. prM-E cleavage is inefficient, and many virions are only partially matured. These uncleaved prM would play a role in immune evasion. May play a role in virus budding. Exerts cytotoxic effects by activating a mitochondrial apoptotic pathway through M ectodomain. May display a viroporin activity. Functionally, binds to host cell surface receptor and mediates fusion between viral and cellular membranes. Envelope protein is synthesized in the endoplasmic reticulum in the form of heterodimer with protein prM. They play a role in virion budding in the ER, and the newly formed immature particle is covered with 60 spikes composed of heterodimer between precursor prM and envelope protein E. The virion is transported to the Golgi apparatus where the low pH causes dissociation of PrM-E heterodimers and formation of E homodimers. In terms of biological role, involved in immune evasion, pathogenesis and viral replication. Interacts with host MAVS and blocks MAVS binding to RIGI or IFIH1/MDA5, thereby leading to evasion of the innate immune response. Once cleaved off the polyprotein, is targeted to three destinations: the viral replication cycle, the plasma membrane and the extracellular compartment. Essential for viral replication. Required for formation of the replication complex and recruitment of other non-structural proteins to the ER-derived membrane structures. Excreted as a hexameric lipoparticle that plays a role against host immune response. Its function is as follows. Component of the viral RNA replication complex that functions in virion assembly. Required cofactor for the serine protease function of NS3. May have membrane-destabilizing activity and form viroporins. Functionally, displays three enzymatic activities: serine protease, NTPase and RNA helicase. NS3 serine protease, in association with NS2B, performs its autocleavage and cleaves the polyprotein at dibasic sites in the cytoplasm: C-prM, NS2A-NS2B, NS2B-NS3, NS3-NS4A, NS4A-2K and NS4B-NS5. NS3 RNA helicase binds RNA and unwinds dsRNA in the 3' to 5' direction. In terms of biological role, regulates the ATPase activity of the NS3 helicase activity. NS4A allows NS3 helicase to conserve energy during unwinding. Its function is as follows. Functions as a signal peptide for NS4B. Induces the formation of ER-derived membrane vesicles where the viral replication takes place. Functionally, replicates the viral (+) and (-) RNA genome, and performs the capping of genomes in the cytoplasm. NS5 methylates viral RNA cap at guanine N-7 and ribose 2'-O positions. This is Genome polyprotein from Anas (ducks).